The chain runs to 304 residues: Acetylglutamate kinase (304 aa).

Residues 64–65, Arg86, and Asn181 contribute to the substrate site; that span reads GG.

This sequence belongs to the acetylglutamate kinase family. ArgB subfamily.

It is found in the plastid. Its subcellular location is the chloroplast. It carries out the reaction N-acetyl-L-glutamate + ATP = N-acetyl-L-glutamyl 5-phosphate + ADP. The protein operates within amino-acid biosynthesis; L-arginine biosynthesis; N(2)-acetyl-L-ornithine from L-glutamate: step 2/4. In terms of biological role, catalyzes the ATP-dependent phosphorylation of N-acetyl-L-glutamate. The polypeptide is Acetylglutamate kinase (Cyanidium caldarium (Red alga)).